The chain runs to 73 residues: Translation initiation factor IF-1 (73 aa).

The region spanning 1 to 73 (MPKKDGAIEI…TRGRIVYRYK (73 aa)) is the S1-like domain.

It belongs to the IF-1 family. As to quaternary structure, component of the 30S ribosomal translation pre-initiation complex which assembles on the 30S ribosome in the order IF-2 and IF-3, IF-1 and N-formylmethionyl-tRNA(fMet); mRNA recruitment can occur at any time during PIC assembly.

It localises to the cytoplasm. In terms of biological role, one of the essential components for the initiation of protein synthesis. Stabilizes the binding of IF-2 and IF-3 on the 30S subunit to which N-formylmethionyl-tRNA(fMet) subsequently binds. Helps modulate mRNA selection, yielding the 30S pre-initiation complex (PIC). Upon addition of the 50S ribosomal subunit IF-1, IF-2 and IF-3 are released leaving the mature 70S translation initiation complex. This chain is Translation initiation factor IF-1, found in Salinispora arenicola (strain CNS-205).